Consider the following 296-residue polypeptide: Ribosomal RNA small subunit methyltransferase A (296 aa).

S-adenosyl-L-methionine-binding residues include asparagine 30, leucine 32, glycine 57, glutamate 78, aspartate 103, and asparagine 128.

It belongs to the class I-like SAM-binding methyltransferase superfamily. rRNA adenine N(6)-methyltransferase family. RsmA subfamily.

It localises to the cytoplasm. It catalyses the reaction adenosine(1518)/adenosine(1519) in 16S rRNA + 4 S-adenosyl-L-methionine = N(6)-dimethyladenosine(1518)/N(6)-dimethyladenosine(1519) in 16S rRNA + 4 S-adenosyl-L-homocysteine + 4 H(+). In terms of biological role, specifically dimethylates two adjacent adenosines (A1518 and A1519) in the loop of a conserved hairpin near the 3'-end of 16S rRNA in the 30S particle. May play a critical role in biogenesis of 30S subunits. This is Ribosomal RNA small subunit methyltransferase A from Staphylococcus carnosus (strain TM300).